Consider the following 175-residue polypeptide: NADH-ubiquinone oxidoreductase chain 6 (175 aa).

A run of 5 helical transmembrane segments spans residues 1 to 21, 27 to 47, 49 to 69, 88 to 108, and 149 to 169; these read MMTY…VGFS, VYGG…VMNF, GSFL…VVFG, VVLG…LYVL, and YGVW…VVIM.

It belongs to the complex I subunit 6 family. Core subunit of respiratory chain NADH dehydrogenase (Complex I) which is composed of 45 different subunits.

The protein localises to the mitochondrion inner membrane. The enzyme catalyses a ubiquinone + NADH + 5 H(+)(in) = a ubiquinol + NAD(+) + 4 H(+)(out). Core subunit of the mitochondrial membrane respiratory chain NADH dehydrogenase (Complex I) which catalyzes electron transfer from NADH through the respiratory chain, using ubiquinone as an electron acceptor. Essential for the catalytic activity and assembly of complex I. The polypeptide is NADH-ubiquinone oxidoreductase chain 6 (MT-ND6) (Pteropus dasymallus (Ryukyu flying fox)).